Reading from the N-terminus, the 627-residue chain is Putative ankyrin repeat protein L122 (627 aa).

ANK repeat units follow at residues 61-94 (KGWT…DVHI), 98-130 (KGRT…DINS), 153-186 (HACY…DPNI), 190-223 (YGKT…NANH), 228-259 (AETV…DINH), 263-296 (IGFT…NINL), 300-333 (DGFT…DIND), 337-370 (NNVT…DLEI), 374-407 (YDWT…NVNV), 411-444 (LGHT…NPNL), 448-480 (DKNT…DSNT), and 491-523 (REYN…NYSD).

This Acanthamoeba polyphaga (Amoeba) protein is Putative ankyrin repeat protein L122.